The sequence spans 160 residues: Serine-protein kinase RsbW (160 aa).

This sequence belongs to the anti-sigma-factor family.

The enzyme catalyses L-seryl-[protein] + ATP = O-phospho-L-seryl-[protein] + ADP + H(+). It catalyses the reaction L-threonyl-[protein] + ATP = O-phospho-L-threonyl-[protein] + ADP + H(+). Functionally, negative regulator of sigma-B activity. Phosphorylates and inactivates its specific antagonist protein, RsbV. Upon phosphorylation of RsbV, RsbW is released and binds to sigma-B, thereby blocking its ability to form an RNA polymerase holoenzyme (E-sigma-B). The polypeptide is Serine-protein kinase RsbW (Bacillus licheniformis).